Here is a 283-residue protein sequence, read N- to C-terminus: Release factor glutamine methyltransferase (283 aa).

Residues 121–125 (GTGSG), D144, and N188 each bind S-adenosyl-L-methionine. 188-191 (NPPY) serves as a coordination point for substrate.

It belongs to the protein N5-glutamine methyltransferase family. PrmC subfamily.

The catalysed reaction is L-glutaminyl-[peptide chain release factor] + S-adenosyl-L-methionine = N(5)-methyl-L-glutaminyl-[peptide chain release factor] + S-adenosyl-L-homocysteine + H(+). Methylates the class 1 translation termination release factors RF1/PrfA and RF2/PrfB on the glutamine residue of the universally conserved GGQ motif. This chain is Release factor glutamine methyltransferase, found in Bacillus anthracis.